The chain runs to 1174 residues: Male determiner protein Mdmd(V) (1174 aa).

Residues 1–15 (MNATDAESRKPENKP) are compositionally biased toward basic and acidic residues. 3 disordered regions span residues 1–51 (MNAT…SGQR), 79–110 (RKDG…PVEL), and 136–259 (KQLS…LRRS). Residues 16–35 (SSESSSSGSTSGSSDGEVSS) show a composition bias toward low complexity. Residues 36–47 (KTYFKNNKSKVL) are compositionally biased toward polar residues. Residues 79-92 (RKDGSNEMLPKEDS) show a composition bias toward basic and acidic residues. A compositionally biased stretch (polar residues) spans 93–102 (INTNHNYTTD). Low complexity predominate over residues 138–153 (LSAYRSRSRSTRLSYS). Over residues 167–180 (SRYKKSVLRSRRTS) the composition is skewed to basic residues. Residues 183–200 (HGRDSSTTKRSVSRDKDN) show a composition bias toward basic and acidic residues. The segment covering 201–223 (RLRRRIGSSRSHTRSHSRFRRSE) has biased composition (basic residues). Residues 235-259 (RSQERRHERRRSMSSDYERIALRRS) show a composition bias toward basic and acidic residues. The region spanning 348-531 (KKYIHGYINK…KVLFQVRRDG (184 aa)) is the MIF4G domain. The span at 597-608 (DSDGSFGSGSNS) shows a compositional bias: low complexity. The disordered stretch occupies residues 597-616 (DSDGSFGSGSNSETALSDCD). The region spanning 641-757 (ALRRTIYLTL…SWDVLDCIKL (117 aa)) is the MI domain. The segment covering 840-857 (SAPSSSSSSSLSSELSAP) has biased composition (low complexity). Disordered stretches follow at residues 840–1045 (SAPS…SRTK) and 1095–1133 (RKDN…NHSR). Residues 869 to 909 (KKKHKGKNKKMTKKKNPSKKKEKTKKIVGKNKIAAKNKTIK) show a composition bias toward basic residues. A compositionally biased stretch (basic and acidic residues) spans 910 to 924 (RRTDKDNSSSKDNFL). Over residues 926-957 (SESSSNESISLDSLSSELFAPSSYSSSESSND) the composition is skewed to low complexity. Over residues 963–1001 (KHKGKNKKMTKKKNPSNKREKTKKKLSKNKKAPNKNTKK) the composition is skewed to basic residues. The segment covering 1010 to 1020 (SSESSISESKS) has biased composition (low complexity). Basic residues predominate over residues 1034–1045 (RKKRVTSKSRTK). A compositionally biased stretch (basic and acidic residues) spans 1095–1118 (RKDNYGNRQNHEISQRHDSEIKRR). Residues 1119–1130 (REERKKRHHEKN) are compositionally biased toward basic residues.

The protein belongs to the CWC22 family. Component of the spliceosome C complex.

Its subcellular location is the nucleus speckle. Functionally, male determiner protein (M-factor) that controls male somatic sexual differentiation. Acts as a dominant factor that regulates the mRNA splicing of transformer (tra) and doublesex (dsx) transcripts and promotes expression of male splice forms of tra and dsx. Probably acts as a component of the spliceosome C complex required for mRNA splicing factor and exon-junction complex (EJC) assembly. Hinders eIF4AIII from non-specifically binding RNA and escorts it to the splicing machinery to promote EJC assembly on mature mRNAs. The polypeptide is Male determiner protein Mdmd(V) (Musca domestica (House fly)).